The following is a 447-amino-acid chain: Tubulin beta chain (447 aa).

8 residues coordinate GTP: glutamine 11, glutamate 69, serine 138, glycine 142, threonine 143, glycine 144, asparagine 204, and asparagine 226. Residue glutamate 69 participates in Mg(2+) binding. The tract at residues 427–447 is disordered; it reads DAGIDEEEEEYEEELPLEGEE. A compositionally biased stretch (acidic residues) spans 429 to 447; sequence GIDEEEEEYEEELPLEGEE.

The protein belongs to the tubulin family. Dimer of alpha and beta chains. A typical microtubule is a hollow water-filled tube with an outer diameter of 25 nm and an inner diameter of 15 nM. Alpha-beta heterodimers associate head-to-tail to form protofilaments running lengthwise along the microtubule wall with the beta-tubulin subunit facing the microtubule plus end conferring a structural polarity. Microtubules usually have 13 protofilaments but different protofilament numbers can be found in some organisms and specialized cells. Mg(2+) serves as cofactor.

Its subcellular location is the cytoplasm. The protein localises to the cytoskeleton. Tubulin is the major constituent of microtubules, a cylinder consisting of laterally associated linear protofilaments composed of alpha- and beta-tubulin heterodimers. Microtubules grow by the addition of GTP-tubulin dimers to the microtubule end, where a stabilizing cap forms. Below the cap, tubulin dimers are in GDP-bound state, owing to GTPase activity of alpha-tubulin. This Hapsidospora chrysogena (Acremonium chrysogenum) protein is Tubulin beta chain (TUB2).